Consider the following 81-residue polypeptide: Protein Vpu (81 aa).

Over M1–L7 the chain is Extracellular. Residues A8–I28 form a helical membrane-spanning segment. Over E29–L81 the chain is Cytoplasmic. Positions A50–L81 are disordered. 2 positions are modified to phosphoserine; by host CK2: S53 and S57. A compositionally biased stretch (acidic residues) spans S53–E63.

The protein belongs to the HIV-1 VPU protein family. As to quaternary structure, homopentamer. Interacts with host CD4 and BRTC; these interactions induce proteasomal degradation of CD4. Interacts with host BST2; this interaction leads to the degradation of host BST2. Interacts with host FBXW11. Interacts with host AP1M1; this interaction plays a role in the mistrafficking and subsequent degradation of host BST2. Interacts with host RANBP2; this interaction allows Vpu to down-regulate host BLM sumoylation. In terms of processing, phosphorylated by host CK2. This phosphorylation is necessary for interaction with human BTRC and degradation of CD4.

The protein localises to the host membrane. With respect to regulation, ion channel activity is inhibited by hexamethylene amiloride in vitro. Its function is as follows. Enhances virion budding by targeting host CD4 and Tetherin/BST2 to proteasome degradation. Degradation of CD4 prevents any unwanted premature interactions between viral Env and its host receptor CD4 in the endoplasmic reticulum. Degradation of antiretroviral protein Tetherin/BST2 is important for virion budding, as BST2 tethers new viral particles to the host cell membrane. Mechanistically, Vpu bridges either CD4 or BST2 to BTRC, a substrate recognition subunit of the Skp1/Cullin/F-box protein E3 ubiquitin ligase, induces their ubiquitination and subsequent proteasomal degradation. The alteration of the E3 ligase specificity by Vpu seems to promote the degradation of host IKBKB, leading to NF-kappa-B down-regulation and subsequent apoptosis. Acts as a viroporin that forms an oligomeric ion channel in membranes. Modulates the host DNA repair mechanisms to promote degradation of nuclear viral cDNA in cells that are already productively infected in order to suppress immune sensing and proviral hyper-integration (superinfection). Manipulates PML-NBs and modulates SUMOylation of host BLM protein thereby enhancing its DNA-end processing activity toward viral unintegrated linear DNA. Also inhibits RAD52-mediated homologous repair of viral cDNA, preventing the generation of dead-end circular forms of single copies of the long terminal repeat and permitting sustained nucleolytic attack. The polypeptide is Protein Vpu (Human immunodeficiency virus type 1 group M subtype B (isolate YU-2) (HIV-1)).